Reading from the N-terminus, the 638-residue chain is ATP-dependent rRNA helicase spb4 (638 aa).

Positions 14–42 (WDGVSPSLSEWVLEAVSSMGFTRMTPVQA) match the Q motif motif. In terms of domain architecture, Helicase ATP-binding spans 45–249 (IPLFMAHKDV…RVGLRNPVKV (205 aa)). Residue 58–65 (AVTGSGKT) participates in ATP binding. The DEAD box motif lies at 197–200 (DEAD). The Helicase C-terminal domain maps to 283–437 (ALKHILHSVD…PISFSESEAT (155 aa)). Composition is skewed to basic and acidic residues over residues 534–554 (LLQE…RKAT) and 577–615 (QRRQ…EERR). The segment at 534 to 638 (LLQESKEGDG…KDEEEFEGFD (105 aa)) is disordered. The stretch at 566 to 619 (RNKKQKRREQKQRRQEKNKWEKMTEEERQKIRETEQMVESIRVKNEEERRLRRA) forms a coiled coil.

It belongs to the DEAD box helicase family. DDX55/SPB4 subfamily. In terms of assembly, component of pre-60S ribosomal complexes.

The protein localises to the nucleus. The protein resides in the nucleolus. The catalysed reaction is ATP + H2O = ADP + phosphate + H(+). Its function is as follows. ATP-binding RNA helicase involved in the biogenesis of 60S ribosomal subunits. Binds 90S pre-ribosomal particles and dissociates from pre-60S ribosomal particles after processing of 27SB pre-rRNA. Required for the normal formation of 18S rRNA through the processing of pre-rRNAs at sites A0, A1 and A2, and the normal formation of 25S and 5.8S rRNAs through the processing of pre-rRNAs at sites C1 and C2. The protein is ATP-dependent rRNA helicase spb4 of Aspergillus oryzae (strain ATCC 42149 / RIB 40) (Yellow koji mold).